A 434-amino-acid polypeptide reads, in one-letter code: MGEKKPETLDFVKDFQEYLTQQTHHVNMISGSVSSDKEAETLQGAGTDSDQNGLDHPSVEVSLDESAGMLVDGFERTFDGKLKCRYCNYASKGTARLIEHIRIHTGEKPHRCHLCPFASAYERHLEAHMRSHTGEKPYKCELCSFRCSDRSNLSHHRRRKHKMLPIKGTRPSLGNKKMWGVLQKKVSSLGYTRRTLINLSPPSMVVHKPDYLSDFAHEIPSIQSEAYESLAKASHSGVLSRDPQELMVDNPLNQLSTLAGQLSSLPPDTQNPASPDTGPCPDEKPFMIQQPPPPACASAVSTSVAQSSSPASPEGRPTHNHRNCSPMAGPSSERSGRTSTPSISNSQPSTPAPALPAQDPQLLHHCQHCDMYFADNILYTIHMGCHGFENPFQCNICGCKCKNKYDFACHFARGACCQHASRCAFRRTDDHVAK.

Residues 33–57 (VSSDKEAETLQGAGTDSDQNGLDHP) are disordered. 3 consecutive C2H2-type zinc fingers follow at residues 82 to 104 (LKCR…IRIH), 110 to 132 (HRCH…MRSH), and 138 to 161 (YKCE…RRKH). Polar residues predominate over residues 260 to 274 (GQLSSLPPDTQNPAS). A disordered region spans residues 260-357 (GQLSSLPPDT…PSTPAPALPA (98 aa)). The span at 296 to 313 (CASAVSTSVAQSSSPASP) shows a compositional bias: low complexity. The segment covering 337–349 (RTSTPSISNSQPS) has biased composition (polar residues). 2 C2H2-type zinc fingers span residues 364–386 (HHCQ…MGCH) and 392–419 (FQCN…CCQH).

The protein belongs to the Ikaros C2H2-type zinc-finger protein family. As to quaternary structure, probably self-associates.

Its subcellular location is the nucleus. Functionally, transcriptional repressor that binds the core 5'GNNTGTNG-3' DNA consensus sequence. In Xenopus tropicalis (Western clawed frog), this protein is Zinc finger protein Pegasus (ikzf5).